The sequence spans 354 residues: Rhodopsin (354 aa).

Topologically, residues 1–36 (MNGTEGPYFNVPMVNTTGIVRSPYEYPQYYLVSPAA) are extracellular. N2 and N15 each carry an N-linked (GlcNAc...) asparagine glycan. A helical membrane pass occupies residues 37–61 (YAALGAYMFFLILVGFPINFLTLYV). Residues 62–73 (TLEHKKLRTPLN) lie on the Cytoplasmic side of the membrane. The helical transmembrane segment at 74 to 96 (YILLNLAVADLFMVFGGFTTTMY) threads the bilayer. Residues 97 to 110 (TSMHGYFVLGRLGC) lie on the Extracellular side of the membrane. C110 and C187 are oxidised to a cystine. Residues 111 to 133 (NLEGFFATLGGEIGLWSLVVLAI) form a helical membrane-spanning segment. Positions 134–136 (ERW) match the 'Ionic lock' involved in activated form stabilization motif. Residues 134–152 (ERWVVVCKPISNFRFGENH) are Cytoplasmic-facing. Residues 153–173 (AIMGLVFTWIMAASCAVPPLV) form a helical membrane-spanning segment. Residues 174-202 (GWSRYIPEGMQCSCGVDYYTRAEGFNNES) are Extracellular-facing. A helical transmembrane segment spans residues 203-224 (FVVYMFVCHFLIPLIVVFFCYG). Residues 225 to 252 (RLLCAVKEAAAAQQESETTQRAEREVTR) lie on the Cytoplasmic side of the membrane. The chain crosses the membrane as a helical span at residues 253-274 (MVVIMVIGFLVCWLPYASVAWY). Residues 275–286 (IFTNQGSEFGPL) lie on the Extracellular side of the membrane. A helical membrane pass occupies residues 287–308 (FMTIPAFFAKSSSIYNPAIYIC). Residue K296 is modified to N6-(retinylidene)lysine. Residues 309–354 (MNKQFRNCMITTLCCGKNPFEEEEGASTTASKTEASSVSSSSVSPA) lie on the Cytoplasmic side of the membrane. S-palmitoyl cysteine attachment occurs at residues C322 and C323. Positions 332 to 354 (EGASTTASKTEASSVSSSSVSPA) are disordered. Residues 334–354 (ASTTASKTEASSVSSSSVSPA) are compositionally biased toward low complexity.

Belongs to the G-protein coupled receptor 1 family. Opsin subfamily. In terms of processing, phosphorylated on some or all of the serine and threonine residues present in the C-terminal region. Post-translationally, contains one covalently linked retinal chromophore.

Its subcellular location is the membrane. It localises to the cell projection. The protein localises to the cilium. The protein resides in the photoreceptor outer segment. Its function is as follows. Photoreceptor required for image-forming vision at low light intensity. While most salt water fish species use retinal as chromophore, most freshwater fish use 3-dehydroretinal, or a mixture of retinal and 3-dehydroretinal. Light-induced isomerization of 11-cis to all-trans retinal triggers a conformational change that activates signaling via G-proteins. Subsequent receptor phosphorylation mediates displacement of the bound G-protein alpha subunit by arrestin and terminates signaling. The chain is Rhodopsin (rho) from Oryzias latipes (Japanese rice fish).